Consider the following 410-residue polypeptide: Elongation factor Tu, chloroplastic (410 aa).

The region spanning 10–213 (KPHLNIGTIG…TVDEYIPTPK (204 aa)) is the tr-type G domain. A G1 region spans residues 19–26 (GHVDHGKT). 19-26 (GHVDHGKT) contributes to the GTP binding site. T26 contacts Mg(2+). Residues 60–64 (GITIN) form a G2 region. Residues 81 to 84 (DCPG) form a G3 region. GTP contacts are provided by residues 81 to 85 (DCPGH) and 136 to 139 (NKAD). Residues 136 to 139 (NKAD) are G4. The interval 174–176 (SAI) is G5.

The protein belongs to the TRAFAC class translation factor GTPase superfamily. Classic translation factor GTPase family. EF-Tu/EF-1A subfamily.

The protein resides in the plastid. It localises to the chloroplast. It carries out the reaction GTP + H2O = GDP + phosphate + H(+). In terms of biological role, GTP hydrolase that promotes the GTP-dependent binding of aminoacyl-tRNA to the A-site of ribosomes during protein biosynthesis. This is Elongation factor Tu, chloroplastic (tufA) from Codium fragile (Dead man's fingers).